The following is a 264-amino-acid chain: Thymidylate synthase (264 aa).

R21 provides a ligand contact to dUMP. H51 serves as a coordination point for (6R)-5,10-methylene-5,6,7,8-tetrahydrofolate. 126-127 serves as a coordination point for dUMP; that stretch reads RR. C146 serves as the catalytic Nucleophile. DUMP contacts are provided by residues 166–169, N177, and 207–209; these read RSAD and HIY. D169 provides a ligand contact to (6R)-5,10-methylene-5,6,7,8-tetrahydrofolate. (6R)-5,10-methylene-5,6,7,8-tetrahydrofolate is bound at residue A263.

This sequence belongs to the thymidylate synthase family. Bacterial-type ThyA subfamily. As to quaternary structure, homodimer.

The protein localises to the cytoplasm. The catalysed reaction is dUMP + (6R)-5,10-methylene-5,6,7,8-tetrahydrofolate = 7,8-dihydrofolate + dTMP. The protein operates within pyrimidine metabolism; dTTP biosynthesis. Functionally, catalyzes the reductive methylation of 2'-deoxyuridine-5'-monophosphate (dUMP) to 2'-deoxythymidine-5'-monophosphate (dTMP) while utilizing 5,10-methylenetetrahydrofolate (mTHF) as the methyl donor and reductant in the reaction, yielding dihydrofolate (DHF) as a by-product. This enzymatic reaction provides an intracellular de novo source of dTMP, an essential precursor for DNA biosynthesis. The chain is Thymidylate synthase from Rhizobium meliloti (strain 1021) (Ensifer meliloti).